We begin with the raw amino-acid sequence, 715 residues long: MDLIELQDIRKTYRLGEIDVPVLRGISLKVSPGDFVALMGTSGSGKTTLMNILGCLDRPTSGHYRFDGQDVVDLTPDQRAALRNRKIGFVFQNFNLLPRMSAVENVMMPLSYAGGGVSDQNGRERAGALLTRMGLGEHLDNEPSQLSGGQQQRVAIARALINNPSLLFADEPTGNLDSATSEEVLRVFQRLNEEEGVTIILVTHDPSVAQCARRIVRIRDGVIEPESGAVGDMPQVSKAAPAQSKPVHSAMRRGDLDKFRRSLHTALSSLRRNVLRAALTTLGIIIGVAAVIAMMEIGRGSSTAIQRTIASMGAHTLALLPGTAASGGVSFGGGSVMTMTPQDSEAIVNECPAVLAAAPIVRARTQVVHGSRNWVPAGIYGTTPTFLEIREWPLAEGDVFTERDVRNASKVCVLGQRLVDELFQGENPIGLEVRIKNVAFKVIGVLSPKGANMMGMDQDDLLLAPWTAIKYRVTGSSLANVNQSAASTSSASITDQVNSLSNLYPTEKVVLYPEISTTQAFDTPLPVRFTNVDQILVGIRSTSGTRAAIRQIGEVLRERHRLRPGEPDDFSVRDMTEMTKTLASTATMMTKLLLAVALISLIVGGVGIMNIMMVSVTERTREIGLRMAVGARAKNILQQFLFEAVLLCFLGGAVGILVGRGISHLVTVLLNWPTELSLDAILAAVGVSATVGIVFGYYPAWKASRLDPIVALRYE.

An ABC transporter domain is found at 4-245 (IELQDIRKTY…VSKAAPAQSK (242 aa)). 40-47 (GTSGSGKT) provides a ligand contact to ATP. The tract at residues 229–251 (AVGDMPQVSKAAPAQSKPVHSAM) is disordered. The next 4 membrane-spanning stretches (helical) occupy residues 277–297 (AALTTLGIIIGVAAVIAMMEI), 592–612 (LLLAVALISLIVGGVGIMNIM), 639–659 (QFLFEAVLLCFLGGAVGILVG), and 681–701 (ILAAVGVSATVGIVFGYYPAW).

The protein belongs to the ABC transporter superfamily. Macrolide exporter (TC 3.A.1.122) family. Homodimer.

It is found in the cell inner membrane. Non-canonical ABC transporter that contains transmembrane domains (TMD), which form a pore in the inner membrane, and an ATP-binding domain (NBD), which is responsible for energy generation. Confers resistance against macrolides. The protein is Macrolide export ATP-binding/permease protein MacB of Syntrophobacter fumaroxidans (strain DSM 10017 / MPOB).